A 316-amino-acid polypeptide reads, in one-letter code: Ribosomal RNA small subunit methyltransferase H (316 aa).

S-adenosyl-L-methionine-binding positions include 35–37 (AGH), D55, F84, D105, and Q112.

The protein belongs to the methyltransferase superfamily. RsmH family.

It is found in the cytoplasm. It catalyses the reaction cytidine(1402) in 16S rRNA + S-adenosyl-L-methionine = N(4)-methylcytidine(1402) in 16S rRNA + S-adenosyl-L-homocysteine + H(+). In terms of biological role, specifically methylates the N4 position of cytidine in position 1402 (C1402) of 16S rRNA. The polypeptide is Ribosomal RNA small subunit methyltransferase H (Streptococcus mutans serotype c (strain ATCC 700610 / UA159)).